A 915-amino-acid chain; its full sequence is Transferrin-binding protein A (915 aa).

The N-terminal stretch at 1–24 (MQQQHLFRFNILCLSLMTALPAYA) is a signal peptide. Residues 25–187 (ENVQAGQAQE…ADDVIGEGRQ (163 aa)) lie on the Periplasmic side of the membrane. Residues 38 to 45 (DTIQVKAK) carry the TonB box motif. One can recognise a TBDR plug domain in the interval 51-176 (RDNEVTGLGK…LAGSVAFQTK (126 aa)). The segment at 121–139 (SYTAQAALGGTRTAGSSGA) is plug loop, interacts with transferrin. Residues 187–915 (QWGIQSKTAY…NYTFSLEMKF (729 aa)) enclose the TBDR beta-barrel domain. Residues 188–197 (WGIQSKTAYS) form a beta stranded membrane-spanning segment. Residues 198 to 203 (GKNRGL) are Extracellular-facing. The chain crosses the membrane as a beta stranded span at residues 204 to 213 (TQSIALAGRI). The Periplasmic portion of the chain corresponds to 214–215 (GG). The beta stranded transmembrane segment at 216-225 (AEALLIHTGR) threads the bilayer. At 226-309 (RAGEIRAHED…FLADPLSYES (84 aa)) the chain is on the extracellular side. Residues 310-319 (RSWLFRPGFR) traverse the membrane as a beta stranded segment. The Periplasmic segment spans residues 320-324 (FENKR). Residues 325-334 (HYIGGILEHT) traverse the membrane as a beta stranded segment. Over 335–406 (QQTFDTRDMT…VFYDETHTKS (72 aa)) the chain is Extracellular. Positions 351–361 (KAVFDANKKQA) are L3 helix finger, interacts with transferrin. A beta stranded transmembrane segment spans residues 407-415 (RYGLEYVYT). Residues 416–423 (NADKDTWA) lie on the Periplasmic side of the membrane. Residues 424 to 433 (DYARLSYDRQ) traverse the membrane as a beta stranded segment. The Extracellular portion of the chain corresponds to 434 to 478 (GIGLDNHFQQTHCSADGSDKYCRPSADKPFSYYKSDRVIYGESHR). The chain crosses the membrane as a beta stranded span at residues 479–488 (LLQAAFKKSF). At 489–494 (DTAKIR) the chain is on the periplasmic side. A beta stranded membrane pass occupies residues 495 to 504 (HNLSVNLGFD). Topologically, residues 505–583 (RFGSNLRHQD…PRSINGKSYY (79 aa)) are extracellular. The interval 523–542 (AYSSNTPPQNNGKKISPNGS) is disordered. A beta stranded membrane pass occupies residues 584–592 (AAVRDNVRL). Residues 593 to 594 (GR) lie on the Periplasmic side of the membrane. A beta stranded membrane pass occupies residues 595–603 (WADVGAGLR). Topologically, residues 604-623 (YDYRSTHSDDGSVSTGTHRT) are extracellular. The chain crosses the membrane as a beta stranded span at residues 624–633 (LSWNAGIVLK). The Periplasmic segment spans residues 634–637 (PTDW). A beta stranded transmembrane segment spans residues 638 to 647 (LDLTYRTSTG). The Extracellular segment spans residues 648–675 (FRLPSFAEMYGWRAGVQSKAVKIDPEKS). The beta stranded transmembrane segment at 676–685 (FNKEAGIVFK) threads the bilayer. Residues 686 to 689 (GDFG) lie on the Periplasmic side of the membrane. The beta stranded transmembrane segment at 690-699 (NLEASWFNNA) threads the bilayer. The Extracellular segment spans residues 700–733 (YRDLIVRGYEAQIKDGKEEAKGDPAYLNAQSARI). Residues 734-743 (TGINILGKID) form a beta stranded membrane-spanning segment. Residues 744-755 (WNGVWDKLPEGW) are Periplasmic-facing. Residues 756 to 765 (YSTFAYNRVR) form a beta stranded membrane-spanning segment. The Extracellular segment spans residues 766 to 790 (VRDIKKRADRTDIQSHLFDAIQPSR). Residues 791–799 (YVVGLGYDQ) traverse the membrane as a beta stranded segment. The Periplasmic segment spans residues 800-802 (PEG). A beta stranded membrane pass occupies residues 803–811 (KWGVNGMLT). Over 812–845 (YSKAKEITELLGSRALLNGNSRNTKATARRTRPW) the chain is Extracellular. A beta stranded membrane pass occupies residues 846–855 (YIVDVSGYYT). Topologically, residues 856–860 (VKKHF) are periplasmic. The beta stranded transmembrane segment at 861–870 (TLRAGVYNLL) threads the bilayer. Over 871–905 (NYRYVTWENVRQTAGGAVNQHKNVGVYNRYAAPGR) the chain is Extracellular. The TonB C-terminal box signature appears at 898–915 (NRYAAPGRNYTFSLEMKF). Residues 906-915 (NYTFSLEMKF) traverse the membrane as a beta stranded segment.

Belongs to the TonB-dependent receptor family. In terms of assembly, binds both human apo- and holo-transferrin (TF), via the TF C-terminus. Forms a large complex with TF and TbpB.

It is found in the cell outer membrane. In terms of biological role, neisseria acquires iron by extracting it from serum transferrin (TF) in its human host. Acts as a TF receptor and is required for TF utilization. Binds both apo- and holo-TF, via the TF C-terminus. This is Transferrin-binding protein A from Neisseria meningitidis serogroup B (strain ATCC BAA-335 / MC58).